The primary structure comprises 188 residues: Crossover junction endodeoxyribonuclease RuvC (188 aa).

Active-site residues include D14, E74, and D149. Residues D14, E74, and D149 each contribute to the Mg(2+) site.

Belongs to the RuvC family. In terms of assembly, homodimer which binds Holliday junction (HJ) DNA. The HJ becomes 2-fold symmetrical on binding to RuvC with unstacked arms; it has a different conformation from HJ DNA in complex with RuvA. In the full resolvosome a probable DNA-RuvA(4)-RuvB(12)-RuvC(2) complex forms which resolves the HJ. It depends on Mg(2+) as a cofactor.

The protein localises to the cytoplasm. The enzyme catalyses Endonucleolytic cleavage at a junction such as a reciprocal single-stranded crossover between two homologous DNA duplexes (Holliday junction).. The RuvA-RuvB-RuvC complex processes Holliday junction (HJ) DNA during genetic recombination and DNA repair. Endonuclease that resolves HJ intermediates. Cleaves cruciform DNA by making single-stranded nicks across the HJ at symmetrical positions within the homologous arms, yielding a 5'-phosphate and a 3'-hydroxyl group; requires a central core of homology in the junction. The consensus cleavage sequence is 5'-(A/T)TT(C/G)-3'. Cleavage occurs on the 3'-side of the TT dinucleotide at the point of strand exchange. HJ branch migration catalyzed by RuvA-RuvB allows RuvC to scan DNA until it finds its consensus sequence, where it cleaves and resolves the cruciform DNA. The sequence is that of Crossover junction endodeoxyribonuclease RuvC from Bacteroides fragilis (strain ATCC 25285 / DSM 2151 / CCUG 4856 / JCM 11019 / LMG 10263 / NCTC 9343 / Onslow / VPI 2553 / EN-2).